Here is a 286-residue protein sequence, read N- to C-terminus: Pantothenate synthetase (286 aa).

Position 30–37 (30–37 (MGALHEGH)) interacts with ATP. Catalysis depends on H37, which acts as the Proton donor. Q61 contributes to the (R)-pantoate binding site. Q61 is a binding site for beta-alanine. 147–150 (GEKD) is a binding site for ATP. Residue Q153 coordinates (R)-pantoate. ATP-binding positions include V180 and 188–191 (LSSR).

This sequence belongs to the pantothenate synthetase family. In terms of assembly, homodimer.

It is found in the cytoplasm. The enzyme catalyses (R)-pantoate + beta-alanine + ATP = (R)-pantothenate + AMP + diphosphate + H(+). Its pathway is cofactor biosynthesis; (R)-pantothenate biosynthesis; (R)-pantothenate from (R)-pantoate and beta-alanine: step 1/1. Functionally, catalyzes the condensation of pantoate with beta-alanine in an ATP-dependent reaction via a pantoyl-adenylate intermediate. This is Pantothenate synthetase from Novosphingobium aromaticivorans (strain ATCC 700278 / DSM 12444 / CCUG 56034 / CIP 105152 / NBRC 16084 / F199).